Reading from the N-terminus, the 506-residue chain is Ribose import ATP-binding protein RbsA 2 (506 aa).

ABC transporter domains lie at 6–241 (LSMT…VGRV) and 254–499 (EKSN…SITI). 38 to 45 (GENGAGKS) contributes to the ATP binding site.

Belongs to the ABC transporter superfamily. Ribose importer (TC 3.A.1.2.1) family. The complex is composed of an ATP-binding protein (RbsA), two transmembrane proteins (RbsC) and a solute-binding protein (RbsB).

It is found in the cell inner membrane. It catalyses the reaction D-ribose(out) + ATP + H2O = D-ribose(in) + ADP + phosphate + H(+). In terms of biological role, part of the ABC transporter complex RbsABC involved in ribose import. Responsible for energy coupling to the transport system. The protein is Ribose import ATP-binding protein RbsA 2 of Agrobacterium fabrum (strain C58 / ATCC 33970) (Agrobacterium tumefaciens (strain C58)).